Reading from the N-terminus, the 558-residue chain is Oxygen-dependent choline dehydrogenase (558 aa).

4–33 lines the FAD pocket; that stretch reads DYIIIGAGSAGNVLATRLTEDSDTTVLLLE. His473 serves as the catalytic Proton acceptor.

The protein belongs to the GMC oxidoreductase family. FAD is required as a cofactor.

The enzyme catalyses choline + A = betaine aldehyde + AH2. The catalysed reaction is betaine aldehyde + NAD(+) + H2O = glycine betaine + NADH + 2 H(+). It participates in amine and polyamine biosynthesis; betaine biosynthesis via choline pathway; betaine aldehyde from choline (cytochrome c reductase route): step 1/1. Involved in the biosynthesis of the osmoprotectant glycine betaine. Catalyzes the oxidation of choline to betaine aldehyde and betaine aldehyde to glycine betaine at the same rate. The sequence is that of Oxygen-dependent choline dehydrogenase from Citrobacter koseri (strain ATCC BAA-895 / CDC 4225-83 / SGSC4696).